A 56-amino-acid chain; its full sequence is Small ribosomal subunit protein bS21 (56 aa).

Belongs to the bacterial ribosomal protein bS21 family.

This Synechococcus sp. (strain RCC307) protein is Small ribosomal subunit protein bS21.